The sequence spans 729 residues: Fatty acid oxidation complex subunit alpha (729 aa).

Residues 1–189 (MLYKGDTLYL…KIGLVDGVVK (189 aa)) form an enoyl-CoA hydratase/isomerase region. Aspartate 296 contributes to the substrate binding site. Residues 311–729 (ETPKQAAVLG…ARPVGDLKTA (419 aa)) are 3-hydroxyacyl-CoA dehydrogenase. NAD(+) contacts are provided by residues methionine 324, aspartate 343, 400-402 (VVE), lysine 407, and serine 429. The active-site For 3-hydroxyacyl-CoA dehydrogenase activity is the histidine 450. Asparagine 453 provides a ligand contact to NAD(+). The substrate site is built by asparagine 500 and tyrosine 660. The tract at residues 708–729 (RHNEPYYPPVEPARPVGDLKTA) is disordered.

It in the N-terminal section; belongs to the enoyl-CoA hydratase/isomerase family. This sequence in the C-terminal section; belongs to the 3-hydroxyacyl-CoA dehydrogenase family. In terms of assembly, heterotetramer of two alpha chains (FadB) and two beta chains (FadA).

The enzyme catalyses a (3S)-3-hydroxyacyl-CoA + NAD(+) = a 3-oxoacyl-CoA + NADH + H(+). The catalysed reaction is a (3S)-3-hydroxyacyl-CoA = a (2E)-enoyl-CoA + H2O. It catalyses the reaction a 4-saturated-(3S)-3-hydroxyacyl-CoA = a (3E)-enoyl-CoA + H2O. It carries out the reaction (3S)-3-hydroxybutanoyl-CoA = (3R)-3-hydroxybutanoyl-CoA. The enzyme catalyses a (3Z)-enoyl-CoA = a 4-saturated (2E)-enoyl-CoA. The catalysed reaction is a (3E)-enoyl-CoA = a 4-saturated (2E)-enoyl-CoA. It participates in lipid metabolism; fatty acid beta-oxidation. Functionally, involved in the aerobic and anaerobic degradation of long-chain fatty acids via beta-oxidation cycle. Catalyzes the formation of 3-oxoacyl-CoA from enoyl-CoA via L-3-hydroxyacyl-CoA. It can also use D-3-hydroxyacyl-CoA and cis-3-enoyl-CoA as substrate. This chain is Fatty acid oxidation complex subunit alpha, found in Escherichia coli O81 (strain ED1a).